A 1191-amino-acid polypeptide reads, in one-letter code: MDMEDEYEPQYNVDDDEEEITQEDAWAVISAYFEEKGLVRQQLDSFDEFIQNTMQEIVDESADIEIRPESQHNPGHQSDFAETIYKINFGQIYLSKPMMTESDGETATLFPKAARLRNLTYSAPLYVDVTKRVIKKGHDGEEVTETQDFTKVFIGKVPIMLRSSYCTLYQNSEKDLTELGECPLDQGGYFIINGSEKVLIAQEKMSTNHVYVFKKRQPNKYAFVAEVRSMADTQNRPPSTMFVRMLSRTSAKGGSSGQYIRATLPYIRTEIPIIIVFRALGFVADKDILEHICYDFNDTQMMELLRPSLEEAFVIQNQQVALDYIGKRGATVGVTREKRIKYAKEILQKEMLPHVGVGEYCETKKAYYFGYIIHRLLLCALGRRAEDDRDHYGNKRLDLAGPLLGGLFRMLFRKLTRDVRGYVQKCVDNGKDVNLQFAIKAKTITSGLKYSLATGNWGQANAAGTRAGVSQVLNRLTYASTLSHLRRLNSPIGREGKLAKPRQLHNSQWGMMCPAETPEGQACGLVKNLALMVYITVGSAAYPILEFLEEWGTENFEEISPAVIPQATKIFVNGTWVGIHRDPDMLVRTLRRLRRRVDVNTEVGVVRDIRLKELRIYTDYGRCSRPLFIVEKQRLMIKKKDIQTLQQRESPDEGGWHDLVAKGYIEYIDTEEEETTMISMTINDLVQARLNPGDAYSDTYTHCEIHPSLILGVCASIIPFPDHNQSPRNTYQSAMGKQAMGIYVTNYQFRMDTLAYVLYYPQKPLVTTRAMEHLHFRQLPAGINAIVAISCYSGYNQEDSVIMNQSSIDRGFFRSLFFRSYRDEEKKMGTLVKEDFGRPDRASTMGMRHGSYDKLDDDGLAPPGTRVSGEDVIIGKTTPISQDDAQGQASRYTRKDHSTSLRHSETGMVDQVLLTTNADGLRFVKVRVRSVRIPQIGDKFSSRHGQKGTVGMTYTQEDMPWTVEGITPDIIVNPHAIPSRMTIGQLIECIMGKVAAHMGKEGDATPFTDVTVDNISKALHKCGYQMRGFETMYNGHTGRRLSAMIFLGPTYYQRLKHMVDDKIHSRGRGPVQILTRQPAEGRSRDGGLRFGEMERDCMIAHGAAHFLKERLFDQSDAYRVHVCERCGLIAIANLKKNSFECRGCKNKTDIVQVHIPYACKLLFQELMAMAIAPRMLTKDVKLAKDQKKKGA.

Asp799 contacts Mg(2+). Positions 842-903 are disordered; that stretch reads ASTMGMRHGS…RKDHSTSLRH (62 aa). Polar residues predominate over residues 878–891; sequence TPISQDDAQGQASR. A compositionally biased stretch (basic and acidic residues) spans 893 to 903; it reads TRKDHSTSLRH. Positions 1123, 1126, 1141, and 1144 each coordinate Zn(2+). A C4-type zinc finger spans residues 1123 to 1144; that stretch reads CERCGLIAIANLKKNSFECRGC.

Belongs to the RNA polymerase beta chain family. In terms of assembly, component of the RNA polymerase II (Pol II) complex consisting of 12 subunits.

It is found in the nucleus. It carries out the reaction RNA(n) + a ribonucleoside 5'-triphosphate = RNA(n+1) + diphosphate. Its function is as follows. DNA-dependent RNA polymerase catalyzes the transcription of DNA into RNA using the four ribonucleoside triphosphates as substrates. Second largest component of RNA polymerase II which synthesizes mRNA precursors and many functional non-coding RNAs. Proposed to contribute to the polymerase catalytic activity and forms the polymerase active center together with the largest subunit. Pol II is the central component of the basal RNA polymerase II transcription machinery. It is composed of mobile elements that move relative to each other. RPB2 is part of the core element with the central large cleft, the clamp element that moves to open and close the cleft and the jaws that are thought to grab the incoming DNA template. The chain is DNA-directed RNA polymerase II subunit RPB2 (RPB2) from Solanum lycopersicum (Tomato).